The following is a 362-amino-acid chain: Glycyl-glycine endopeptidase ALE-1 (362 aa).

Positions 1-35 (MDTNRKFTLVKSLSIGLGTFLVGSVFLTVNDEASA) are cleaved as a signal peptide. Residues 35–110 (ASTKVDAPKV…PAKADAPKVE (76 aa)) form a disordered region. Residues 40-110 (DAPKVEQEAP…PAKADAPKVE (71 aa)) are compositionally biased toward basic and acidic residues. Zn(2+) contacts are provided by histidine 150 and aspartate 154. Histidine 231 is a catalytic residue. Histidine 233 lines the Zn(2+) pocket. Residues 282–350 (SESASFTANT…YLPVRTWNES (69 aa)) enclose the SH3b domain.

Belongs to the peptidase M23B family. It depends on Zn(2+) as a cofactor.

It localises to the secreted. The catalysed reaction is Hydrolysis of the -Gly-|-Gly- bond in the pentaglycine inter-peptide link joining staphylococcal cell wall peptidoglycans.. Lyses staphylococcal cells by hydrolyzing the polyglycine interpeptide bridges of the peptidoglycan. The polypeptide is Glycyl-glycine endopeptidase ALE-1 (Staphylococcus capitis).